Reading from the N-terminus, the 591-residue chain is Serine/threonine-protein phosphatase PP2A 65 kDa regulatory subunit (591 aa).

Ala-2 is modified (N-acetylalanine). HEAT repeat units lie at residues 10-48 (DSLY…GEER), 49-86 (TRSE…GGPE), 87-125 (FAMY…SAQD), 126-163 (LEIH…VTQP), 164-202 (VKAE…ETEY), 203-241 (LKSD…PQDD), 242-280 (VEHL…GPEI), 281-323 (TRVD…QVQI), 324-362 (ILSS…GAYQ), 363-401 (TVEQ…GIQQ), 402-440 (LSQS…GQEF), 441-479 (FDQK…GAPW), 480-518 (AEQA…GTDI), 519-557 (TTKL…EASV), and 558-591 (IDAQ…IAAA).

It belongs to the phosphatase 2A regulatory subunit A family. As to quaternary structure, PP2A exists in several trimeric forms, all of which consist of a core composed of a catalytic subunit associated with a 65 kDa regulatory subunit (PR65) (subunit A). The core complex associates with a third, variable subunit (subunit B), which confers distinct properties to the holoenzyme. Interacts with the inorganic phosphate transporter PXo (CG10483). Component of the Integrator-PP2A (INTAC) complex, composed of the Integrator core complex and protein phosphatase 2A subunits mts/PP2A and Pp2A-29B. As to expression, expression varies in tissues throughout development. Highly distributed expression in early embryos. In late embryonal development, found at high levels in nervous system and gonads. In third instar larvae, found in brain, imaginal disks and salivary glands.

It localises to the nucleus. Functionally, the PR65 subunit of protein phosphatase 2A serves as a scaffolding molecule to coordinate the assembly of the catalytic subunit and a variable regulatory B subunit. Key mediator of a quality checkpoint during transcription elongation as part of the Integrator-PP2A (INTAC) complex. The INTAC complex drives premature transcription termination of transcripts that are unfavorably configured for transcriptional elongation: within the INTAC complex, acts as a scaffolding subunit for mts/PP2A, which catalyzes dephosphorylation of the C-terminal domain (CTD) of Pol II subunit POLR2A/RPB1 and Spt5, thereby preventing transcriptional elongation. The polypeptide is Serine/threonine-protein phosphatase PP2A 65 kDa regulatory subunit (Pp2A-29B) (Drosophila melanogaster (Fruit fly)).